Consider the following 878-residue polypeptide: Alanine--tRNA ligase (878 aa).

Zn(2+) contacts are provided by His566, His570, Cys668, and His672. Residues 846-866 form a disordered region; that stretch reads GGGRPDMAQAGGKQPEKLEEA.

The protein belongs to the class-II aminoacyl-tRNA synthetase family. Zn(2+) is required as a cofactor.

The protein localises to the cytoplasm. The catalysed reaction is tRNA(Ala) + L-alanine + ATP = L-alanyl-tRNA(Ala) + AMP + diphosphate. Its function is as follows. Catalyzes the attachment of alanine to tRNA(Ala) in a two-step reaction: alanine is first activated by ATP to form Ala-AMP and then transferred to the acceptor end of tRNA(Ala). Also edits incorrectly charged Ser-tRNA(Ala) and Gly-tRNA(Ala) via its editing domain. This Bacillus pumilus (strain SAFR-032) protein is Alanine--tRNA ligase.